The sequence spans 320 residues: Adenosine receptor A3 (320 aa).

The Extracellular portion of the chain corresponds to 1-16; that stretch reads MKANNTTTSALWLQIT. 2 N-linked (GlcNAc...) asparagine glycosylation sites follow: Asn4 and Asn5. A helical membrane pass occupies residues 17 to 39; sequence YITMEAAIGLCAVVGNMLVIWVV. The Cytoplasmic portion of the chain corresponds to 40 to 50; the sequence is KLNRTLRTTTF. Residues 51 to 74 form a helical membrane-spanning segment; the sequence is YFIVSLALADIAVGVLVIPLAIAV. Topologically, residues 75-86 are extracellular; that stretch reads SLEVQMHFYACL. A disulfide bridge links Cys85 with Cys168. Residues 87-108 traverse the membrane as a helical segment; that stretch reads FMSCVLLVFTHASIMSLLAIAV. Over 109–128 the chain is Cytoplasmic; sequence DRYLRVKLTVRYRTVTTQRR. The helical transmembrane segment at 129 to 150 threads the bilayer; that stretch reads IWLFLGLCWLVSFLVGLTPMFG. At 151 to 179 the chain is on the extracellular side; it reads WNRKVTLELSQNSSTLSCHFRSVVGLDYM. Residues 180 to 200 traverse the membrane as a helical segment; that stretch reads VFFSFITWILIPLVVMCIIYL. At 201 to 233 the chain is on the cytoplasmic side; sequence DIFYIIRNKLSQNLTGFRETRAFYGREFKTAKS. A helical membrane pass occupies residues 234 to 257; the sequence is LFLVLFLFALCWLPLSIINFVSYF. The Extracellular portion of the chain corresponds to 258–263; it reads NVKIPE. Residues 264 to 286 traverse the membrane as a helical segment; sequence IAMCLGILLSHANSMMNPIVYAC. At 287 to 320 the chain is on the cytoplasmic side; sequence KIKKFKETYFVILRACRLCQTSDSLDSNLEQTTE. Cys305 carries S-palmitoyl cysteine lipidation. Phosphothreonine occurs at positions 307, 318, and 319.

Belongs to the G-protein coupled receptor 1 family. Post-translationally, phosphorylation on Thr-318 and Thr-319 may be crucial for rapid desensitization. Phosphorylation on Thr-318 may be necessary for phosphorylation on Thr-319 to occur. Testis, particularly in spermatocytes and spermatids but not in spermatogonia. Low levels in the brain.

It localises to the cell membrane. Functionally, receptor for adenosine. The activity of this receptor is mediated by G proteins which inhibits adenylyl cyclase. May play a role during reproduction. In Rattus norvegicus (Rat), this protein is Adenosine receptor A3 (Adora3).